We begin with the raw amino-acid sequence, 158 residues long: uncharacterized protein (158 aa).

The interval Ala77–Lys132 is disordered. Residues Ser100–Lys120 show a composition bias toward basic residues.

This is an uncharacterized protein from Acanthamoeba polyphaga mimivirus (APMV).